The chain runs to 401 residues: Cytochrome P450 BJ-1 (401 aa).

C350 provides a ligand contact to heme.

The protein belongs to the cytochrome P450 family. The cofactor is heme.

Cytochromes P450 are a group of heme-thiolate monooxygenases. They oxidize a variety of structurally unrelated compounds, including steroids, fatty acids, and xenobiotics. The polypeptide is Cytochrome P450 BJ-1 (cyp112) (Bradyrhizobium diazoefficiens (strain JCM 10833 / BCRC 13528 / IAM 13628 / NBRC 14792 / USDA 110)).